Reading from the N-terminus, the 358-residue chain is MPNPSCTSSPGPLPEEIRNLLADVETFVADTLKGENLSKKAKEKRESLIKKIKDVKSVYLQEFQDKGDAEDGDEYDDPFAGPADTISLASERYDKDDDGPSDGNQFPPIAAQDLPFVIKAGYLEKRRKDHSFLGFEWQKRWCALSKTVFYYYGSDKDKQQKGEFAIDGYDVRMNNTLRKDGKKDCCFEICAPDKRIYQFTAASPKDAEEWVQQLKFILQDLGSDVIPEDDEERGELYDDVDHPAAVSSPQRSQPIDDEIYEELPEEEEDTASVKMDEQGKGSRDSVHHTSGDKSTDYANFYQGLWDCTGALSDELSFKRGDVIYILSKEYNRYGWWVGEMKGAIGLVPKAYLMEMYDI.

Ser-5 and Ser-9 each carry phosphoserine. Positions 14 to 64 (PEEIRNLLADVETFVADTLKGENLSKKAKEKRESLIKKIKDVKSVYLQEFQ) are homodimerization. The residue at position 75 (Tyr-75) is a Phosphotyrosine. Ser-87 and Ser-90 each carry phosphoserine. The PH domain occupies 116 to 219 (FVIKAGYLEK…WVQQLKFILQ (104 aa)). A phosphotyrosine mark is found at Tyr-151 and Tyr-197. At Ser-223 the chain carries Phosphoserine. Residues 232-292 (ERGELYDDVD…RDSVHHTSGD (61 aa)) are disordered. The segment covering 255-270 (IDDEIYEELPEEEEDT) has biased composition (acidic residues). Tyr-260 carries the phosphotyrosine; by FYN modification. 3 positions are modified to phosphoserine: Ser-272, Ser-282, and Ser-285. A compositionally biased stretch (basic and acidic residues) spans 274-292 (KMDEQGKGSRDSVHHTSGD). The region spanning 296-357 (DYANFYQGLW…PKAYLMEMYD (62 aa)) is the SH3 domain.

This sequence belongs to the SKAP family. Interacts with LAT, GRB2, PTK2B and PRAM1. Homodimer. Interacts with FYB1, which is required for SKAP2 protein stability. Interacts with PTPNS1. Part of a complex consisting of SKAP2, FYB1 and PTPNS1. Part of a complex consisting of SKAP2, FYB1 and PIRB. May interact with actin. May interact with FYN, HCK and LYN. Interacts with FASLG. Dephosphorylated on Tyr-75 by PTPN22. Phosphorylated by FYN on Tyr-260. In case of infection with Y.pseudotuberculosis, dephosphorylated by bacterial phosphatase yopH. In terms of tissue distribution, expressed in kidney, lung, liver, spleen, bone marrow and testis. Present in T-cells, B-cells, and all cells of the myelomonocytic lineage. Present in all brain regions, with highest levels in neurons from the Purkinje cell layer, hippocampal gyrus, cortex and substantia nigra (at protein level).

It localises to the cytoplasm. Functionally, may be involved in B-cell and macrophage adhesion processes. In B-cells, may act by coupling the B-cell receptor (BCR) to integrin activation. May play a role in src signaling pathway. The sequence is that of Src kinase-associated phosphoprotein 2 (Skap2) from Mus musculus (Mouse).